The following is a 484-amino-acid chain: Sialidase-4 (484 aa).

Positions 22-25 match the FRIP motif motif; it reads YRVP. The substrate site is built by Arg23 and Arg43. Catalysis depends on proton acceptor residues Asp47 and Asp48. The BNR 1 repeat unit spans residues 127-138; that stretch reads VASRDAGLSWGS. 2 residues coordinate substrate: Tyr177 and Tyr179. Residues 200-211 form a BNR 2 repeat; the sequence is FYSDDHGRTWRC. Residues Glu222 and Arg242 each coordinate substrate. Residues 251–262 form a BNR 3 repeat; sequence ALSTDEGTSFLP. The interval 284 to 357 is disordered; sequence PAPAPNRPRD…GPRPGVSGDV (74 aa). A compositionally biased stretch (low complexity) spans 336 to 345; sequence RLQPRGDGPR. Residue Arg389 coordinates substrate. The Nucleophile role is filled by Tyr419. Glu440 is a catalytic residue.

It belongs to the glycosyl hydrolase 33 family. Post-translationally, N-glycosylated. As to expression, predominant form in liver. Also expressed in brain, kidney and colon. Highly expressed in brain and at lower levels in kidney and liver.

Its subcellular location is the cell membrane. It localises to the endoplasmic reticulum membrane. It is found in the microsome membrane. The protein localises to the mitochondrion membrane. The protein resides in the cell projection. Its subcellular location is the neuron projection. It localises to the mitochondrion inner membrane. It is found in the mitochondrion outer membrane. The protein localises to the lysosome lumen. The enzyme catalyses Hydrolysis of alpha-(2-&gt;3)-, alpha-(2-&gt;6)-, alpha-(2-&gt;8)- glycosidic linkages of terminal sialic acid residues in oligosaccharides, glycoproteins, glycolipids, colominic acid and synthetic substrates.. It catalyses the reaction a ganglioside GM3 + H2O = a beta-D-galactosyl-(1-&gt;4)-beta-D-glucosyl-(1&lt;-&gt;1)-ceramide + N-acetylneuraminate. The catalysed reaction is a ganglioside GM3 (d18:1(4E)) + H2O = a beta-D-Gal-(1-&gt;4)-beta-D-Glc-(1&lt;-&gt;1)-Cer(d18:1(4E)) + N-acetylneuraminate. It carries out the reaction a ganglioside GM2 + H2O = a ganglioside GA2 + N-acetylneuraminate. The enzyme catalyses a ganglioside GM2 (d18:1(4E)) + H2O = a ganglioside GA2 (d18:1(4E)) + N-acetylneuraminate. It catalyses the reaction a ganglioside GD1a + H2O = a ganglioside GM1 + N-acetylneuraminate. The catalysed reaction is a ganglioside GD1a (d18:1(4E)) + H2O = a ganglioside GM1 (d18:1(4E)) + N-acetylneuraminate. It carries out the reaction a ganglioside GD3 + H2O = a ganglioside GM3 + N-acetylneuraminate. The enzyme catalyses a ganglioside GD3 (d18:1(4E)) + H2O = a ganglioside GM3 (d18:1(4E)) + N-acetylneuraminate. In terms of biological role, exo-alpha-sialidase that catalyzes the hydrolytic cleavage of the terminal sialic acid (N-acetylneuraminic acid, Neu5Ac) of a glycan moiety in the catabolism of glycolipids, glycoproteins and oligosacharides. Efficiently hydrolyzes gangliosides including alpha-(2-&gt;3)-sialylated GD1a and GM3 and alpha-(2-&gt;8)-sialylated GD3. Hydrolyzes poly-alpha-(2-&gt;8)-sialylated neural cell adhesion molecule NCAM1 likely at growth cones, suppressing neurite outgrowth in hippocampal neurons. May desialylate sialyl Lewis A and X antigens at the cell surface, down-regulating these glycan epitopes recognized by SELE/E selectin in the initiation of cell adhesion and extravasation. Has sialidase activity toward mucin, fetuin and sialyllactose. The polypeptide is Sialidase-4 (NEU4) (Homo sapiens (Human)).